Consider the following 148-residue polypeptide: Arginine repressor (148 aa).

Belongs to the ArgR family.

The protein resides in the cytoplasm. The protein operates within amino-acid biosynthesis; L-arginine biosynthesis [regulation]. Functionally, regulates arginine biosynthesis genes. The sequence is that of Arginine repressor (argR) from Streptococcus pneumoniae serotype 4 (strain ATCC BAA-334 / TIGR4).